Reading from the N-terminus, the 257-residue chain is Type 2 phosphatidylinositol 4,5-bisphosphate 4-phosphatase (257 aa).

The span at 1–10 shows a compositional bias: basic and acidic residues; that stretch reads MAADGVDERS. The disordered stretch occupies residues 1-34; that stretch reads MAADGVDERSPLLSASHSGSVTPTAPPYLQDSSP. The span at 13–23 shows a compositional bias: polar residues; that stretch reads LSASHSGSVTP. The residue at position 22 (threonine 22) is a Phosphothreonine. Residue serine 33 is modified to Phosphoserine. Residue cysteine 107 is part of the active site. Residues 107 to 113 carry the CX5R motif motif; that stretch reads CKDTSRR. 2 consecutive transmembrane segments (helical) span residues 192–212 and 227–247; these read CCAY…LTVG and WAIA…WGAI.

Its subcellular location is the late endosome membrane. It is found in the lysosome membrane. It localises to the cytoplasmic vesicle. The protein localises to the phagosome membrane. The protein resides in the cell membrane. The enzyme catalyses a 1,2-diacyl-sn-glycero-3-phospho-(1D-myo-inositol-4,5-bisphosphate) + H2O = a 1,2-diacyl-sn-glycero-3-phospho-(1D-myo-inositol-5-phosphate) + phosphate. Catalyzes the hydrolysis of phosphatidylinositol-4,5-bisphosphate (PtdIns-4,5-P2) to phosphatidylinositol-4-phosphate (PtdIns-4-P). Does not hydrolyze phosphatidylinositol 3,4,5-trisphosphate, phosphatidylinositol 3,4-bisphosphate, inositol 3,5-bisphosphate, inositol 3,4-bisphosphate, phosphatidylinositol 5-monophosphate, phosphatidylinositol 4-monophosphate and phosphatidylinositol 3-monophosphate. Negatively regulates the phagocytosis of large particles by reducing phagosomal phosphatidylinositol 4,5-bisphosphate accumulation during cup formation. The polypeptide is Type 2 phosphatidylinositol 4,5-bisphosphate 4-phosphatase (Bos taurus (Bovine)).